We begin with the raw amino-acid sequence, 473 residues long: MSLTIAIVGRPNVGKSTLFNRLVGKKLALVDDKPGVTRDRRIHAARFQDLYFDVIDTAGLEEADDHTLEGRMRSQTKVAIDEADLILFVLDAKSGITSSDLNFASLVRKSEKPIVLVANKSESKAATEGKYEAWSLGLGEPCAISAEHGLGLSDLRDAIVDAVGKDKAFDNKKEEDTIIQSASVGDNGDDLEEEGCIYDESAPIRIAIAGRPNTGKSTLINSMLGQDRLLTGPEAGVTRDSISIDWEWRSRHIKLFDTAGLRRKSKIQEKLEKLSVTDTLRAIRFAEVVVIVFDSTAPFEKQDLQIVDLVIREGRVPIIAFNKWDLIENCQEILADLHEKCACLLPQVRGLRAVPLSGQYGQGIDKLMENITMIHRIWNRRISTGKLNRWLETVVTRHPPPAISGRRLKVKYITQIKTRPPGFMISCSRPEVMPQSYLRYLSNGLRDAFDMPGVPIRLSLRTSDNPFVGSAKK.

2 EngA-type G domains span residues 3–167 (LTIA…GKDK) and 204–379 (IRIA…RIWN). GTP is bound by residues 9-16 (GRPNVGKS), 56-60 (DTAGL), 119-122 (NKSE), 210-217 (GRPNTGKS), 257-261 (DTAGL), and 322-325 (NKWD). The region spanning 380–464 (RRISTGKLNR…PIRLSLRTSD (85 aa)) is the KH-like domain.

Belongs to the TRAFAC class TrmE-Era-EngA-EngB-Septin-like GTPase superfamily. EngA (Der) GTPase family. In terms of assembly, associates with the 50S ribosomal subunit.

Its function is as follows. GTPase that plays an essential role in the late steps of ribosome biogenesis. This Bartonella bacilliformis (strain ATCC 35685 / KC583 / Herrer 020/F12,63) protein is GTPase Der.